Consider the following 299-residue polypeptide: Elongation factor Ts (299 aa).

The interval threonine 82–valine 85 is involved in Mg(2+) ion dislocation from EF-Tu.

The protein belongs to the EF-Ts family.

It localises to the cytoplasm. Associates with the EF-Tu.GDP complex and induces the exchange of GDP to GTP. It remains bound to the aminoacyl-tRNA.EF-Tu.GTP complex up to the GTP hydrolysis stage on the ribosome. The polypeptide is Elongation factor Ts (Dechloromonas aromatica (strain RCB)).